The chain runs to 592 residues: Putative amidase ARB_02965 (592 aa).

The N-terminal stretch at 1–21 is a signal peptide; that stretch reads MKGPITFLLQLGAVYTSIASA. Residue Asn120 is glycosylated (N-linked (GlcNAc...) asparagine). Residue Lys161 is the Charge relay system of the active site. A glycan (N-linked (GlcNAc...) asparagine) is linked at Asn217. Ser242 (charge relay system) is an active-site residue. Residues Ser242 and 263–266 contribute to the substrate site; that span reads TSGS. The active-site Acyl-ester intermediate is the Ser266. Residues Asn326, Asn430, and Asn528 are each glycosylated (N-linked (GlcNAc...) asparagine).

This sequence belongs to the amidase family.

It localises to the secreted. The sequence is that of Putative amidase ARB_02965 from Arthroderma benhamiae (strain ATCC MYA-4681 / CBS 112371) (Trichophyton mentagrophytes).